Reading from the N-terminus, the 371-residue chain is MKKAISIFPKEFGFFPYIFLVYTIMPFLSLLKESGVKQGIGYGMLLLFVAAYRQLFCSVGKASFTYWLIVQMAVILMYSVFYNITYIYLGFFPANFVGYYKEKTNFNRAFCALIFILLFPCLYQFIANSVSLRELFSVLPFLVIMLISPFGIRSMFRRIELEAKLAQANEQIKELSKREERVRIARDLHDTLGHTLSLLTLKSQLIQRLAASDPERTKLEAKEMETSSRSALKQVRELVSDMRTVTITEELVNIQHILRAGNITFQYEGADDFSVISPVTQNIISMCMREAVTNIIKHSKATHCAITISQFADKMRIVIRDDGKGAPKEKMFGNGLWGMEERLMLIEGGLTVSDHNGTVVALTIPLIKKAE.

Over 1–10 (MKKAISIFPK) the chain is Extracellular. Residues 11–31 (EFGFFPYIFLVYTIMPFLSLL) form a helical membrane-spanning segment. The Cytoplasmic segment spans residues 32 to 38 (KESGVKQ). Residues 39 to 59 (GIGYGMLLLFVAAYRQLFCSV) form a helical membrane-spanning segment. Topologically, residues 60–71 (GKASFTYWLIVQ) are extracellular. Residues 72–92 (MAVILMYSVFYNITYIYLGFF) traverse the membrane as a helical segment. Over 93–109 (PANFVGYYKEKTNFNRA) the chain is Cytoplasmic. A helical membrane pass occupies residues 110-130 (FCALIFILLFPCLYQFIANSV). At 131-135 (SLREL) the chain is on the extracellular side. A helical membrane pass occupies residues 136-156 (FSVLPFLVIMLISPFGIRSMF). At 157–371 (RRIELEAKLA…LTIPLIKKAE (215 aa)) the chain is on the cytoplasmic side. The region spanning 187–368 (DLHDTLGHTL…VVALTIPLIK (182 aa)) is the Histidine kinase domain. A Phosphohistidine; by autocatalysis modification is found at histidine 189.

The protein localises to the cell membrane. The enzyme catalyses ATP + protein L-histidine = ADP + protein N-phospho-L-histidine.. Member of the two-component regulatory system YvfT/YvfU. Probably activates YvfU by phosphorylation. The polypeptide is Sensor histidine kinase YvfT (yvfT) (Bacillus subtilis (strain 168)).